A 94-amino-acid chain; its full sequence is Pyrimidine/purine nucleoside phosphorylase (94 aa).

Belongs to the nucleoside phosphorylase PpnP family.

It carries out the reaction a purine D-ribonucleoside + phosphate = a purine nucleobase + alpha-D-ribose 1-phosphate. It catalyses the reaction adenosine + phosphate = alpha-D-ribose 1-phosphate + adenine. The catalysed reaction is cytidine + phosphate = cytosine + alpha-D-ribose 1-phosphate. The enzyme catalyses guanosine + phosphate = alpha-D-ribose 1-phosphate + guanine. It carries out the reaction inosine + phosphate = alpha-D-ribose 1-phosphate + hypoxanthine. It catalyses the reaction thymidine + phosphate = 2-deoxy-alpha-D-ribose 1-phosphate + thymine. The catalysed reaction is uridine + phosphate = alpha-D-ribose 1-phosphate + uracil. The enzyme catalyses xanthosine + phosphate = alpha-D-ribose 1-phosphate + xanthine. Catalyzes the phosphorolysis of diverse nucleosides, yielding D-ribose 1-phosphate and the respective free bases. Can use uridine, adenosine, guanosine, cytidine, thymidine, inosine and xanthosine as substrates. Also catalyzes the reverse reactions. This chain is Pyrimidine/purine nucleoside phosphorylase, found in Saccharophagus degradans (strain 2-40 / ATCC 43961 / DSM 17024).